The sequence spans 1358 residues: Retrotransposon-like protein 1 (1358 aa).

2 disordered regions span residues 1–159 and 563–616; these read MIEP…TEHS and ADVF…TAPW. A compositionally biased stretch (low complexity) spans 19–30; it reads SSKQMESSEGSS. Residues 65–79 show a composition bias toward acidic residues; sequence EMEELPTDLLQDMEE. The segment covering 131 to 149 has biased composition (basic and acidic residues); sequence AREEQEAHTDLKESGREET. Residues 583-592 are compositionally biased toward acidic residues; it reads GSDDLSESEP. The next 2 helical transmembrane spans lie at 1083–1099 and 1126–1146; these read LLYW…LVLL and LILD…TQLL. 2 disordered regions span residues 1250 to 1283 and 1338 to 1358; these read DGLQ…PRHL and QPRE…ANLD. Positions 1267 to 1276 are enriched in low complexity; it reads APPSHTAATH. Positions 1338 to 1347 are enriched in basic and acidic residues; that stretch reads QPREQARLEE. Residues 1348–1358 show a composition bias toward acidic residues; that stretch reads LPDEDEDANLD.

It is found in the membrane. In terms of biological role, plays an essential role in capillaries endothelial cells for the maintenance of feto-maternal interface and for development of the placenta. In Homo sapiens (Human), this protein is Retrotransposon-like protein 1 (RTL1).